The following is a 196-amino-acid chain: Small ribosomal subunit protein uS4c (196 aa).

The disordered stretch occupies residues 17-36; the sequence is ALPGLTRKTPKSGSNLKKKF. An S4 RNA-binding domain is found at 89 to 150; the sequence is MRLDNILFRL…NQRSKRLIQN (62 aa).

It belongs to the universal ribosomal protein uS4 family. As to quaternary structure, part of the 30S ribosomal subunit. Contacts protein S5. The interaction surface between S4 and S5 is involved in control of translational fidelity.

The protein resides in the plastid. It localises to the chloroplast. Its function is as follows. One of the primary rRNA binding proteins, it binds directly to 16S rRNA where it nucleates assembly of the body of the 30S subunit. In terms of biological role, with S5 and S12 plays an important role in translational accuracy. The sequence is that of Small ribosomal subunit protein uS4c (rps4) from Phyllostachys flexuosa (Drooping timber bamboo).